The sequence spans 344 residues: Phenylalanine--tRNA ligase alpha subunit (344 aa).

Glu-256 contacts Mg(2+).

This sequence belongs to the class-II aminoacyl-tRNA synthetase family. Phe-tRNA synthetase alpha subunit type 1 subfamily. In terms of assembly, tetramer of two alpha and two beta subunits. It depends on Mg(2+) as a cofactor.

Its subcellular location is the cytoplasm. The enzyme catalyses tRNA(Phe) + L-phenylalanine + ATP = L-phenylalanyl-tRNA(Phe) + AMP + diphosphate + H(+). The sequence is that of Phenylalanine--tRNA ligase alpha subunit from Oceanobacillus iheyensis (strain DSM 14371 / CIP 107618 / JCM 11309 / KCTC 3954 / HTE831).